The sequence spans 341 residues: Elongation factor G (341 aa).

Belongs to the GTP-binding elongation factor family. EF-G/EF-2 subfamily.

Its subcellular location is the cytoplasm. Catalyzes the GTP-dependent ribosomal translocation step during translation elongation. During this step, the ribosome changes from the pre-translocational (PRE) to the post-translocational (POST) state as the newly formed A-site-bound peptidyl-tRNA and P-site-bound deacylated tRNA move to the P and E sites, respectively. Catalyzes the coordinated movement of the two tRNA molecules, the mRNA and conformational changes in the ribosome. This Streptomyces ramocissimus protein is Elongation factor G (fus).